The primary structure comprises 377 residues: Testis-expressed protein 13A (377 aa).

Positions 92–377 (WLQDLSSLHK…CGKGIWLQNP (286 aa)) are required for repression of transcription. Positions 122-156 (QKEVALQLQMAQAKLEEVQRERDLLRLKILQAELR) form a coiled coil. Residues 142 to 165 (ERDLLRLKILQAELRALPNAVRPA) form an LRR repeat. A RanBP2-type zinc finger spans residues 345–369 (RPGDWDCPWCKAVNFSRRENCFHCG). Residues Cys-351, Cys-354, Cys-365, and Cys-368 each contribute to the Zn(2+) site.

The protein belongs to the TEX13 family. As to quaternary structure, interacts with CNOT1; the interaction may inhibit CNOT1 binding to mRNA and subsequently CNOT1-mediated mRNA degradation.

Functionally, binds to ssRNA containing the consensus sequence 5'-AGGUAA-3'. Plays a role in transcriptional repression. Required for rapid sperm motility and timely degradation of mRNA via its interaction with CNOT1. The protein is Testis-expressed protein 13A of Mus musculus (Mouse).